The chain runs to 263 residues: Aminoglycoside (3'') (9) adenylyltransferase (263 aa).

It catalyses the reaction streptomycin + ATP = 3''-O-adenylylstreptomycin + diphosphate. The catalysed reaction is spectinomycin + ATP = 9-O-adenylylspectinomycin + diphosphate. Functionally, mediates bacterial resistance to the antibiotics streptomycin and spectinomycin. The protein is Aminoglycoside (3'') (9) adenylyltransferase of Escherichia coli.